A 92-amino-acid chain; its full sequence is Secreted RxLR effector protein RXLR-C02 (92 aa).

Residues 1–21 form the signal peptide; sequence MQFHLLVMTTIAASFAATGSA. A RxLR motif is present at residues 48-51; that stretch reads RALR. The segment at 54–75 is disordered; that stretch reads ENRGLIGDDSDSSISDSDSEAK.

Belongs to the RxLR effector family.

The protein localises to the secreted. It localises to the host cytoplasm. Its subcellular location is the host nucleus. Functionally, secreted effector that suppresses pattern-triggered immunity (PTI) in plant host. The sequence is that of Secreted RxLR effector protein RXLR-C02 from Plasmopara halstedii (Downy mildew of sunflower).